Consider the following 341-residue polypeptide: MLSLKEFNTFGLSAYAKRLDIAESAESLLALWQKAKSEKQPVLLLGGGSNVLFTTNFEGTVILNRIMGIQQRETDESWHLHVGAGENWHELVCHSLKNQIYGLENLALIPGCSGAAPIQNIGAYGIEFRDVCEYVDVLNLETGEQTRLSVGECQFRYRDSIFKHKYKANHSIISVGLLLKKNWQPILNYGNLTRLSKDNVTPQQIFDSVCAMRTSKLPDPAITGNAGSFFKNPIVSAEVAAKIKENYPDSPQYSYTNGMFKLAAAWLIERCNLKGYRIGGASVHLRQALVLINQENATGKDVVLLAAYIRRQVISKFGVLLEPEVRFIGSKGEIDAVECIS.

Positions 12–182 (LSAYAKRLDI…ISVGLLLKKN (171 aa)) constitute an FAD-binding PCMH-type domain. Residue Arg-158 is part of the active site. Ser-228 functions as the Proton donor in the catalytic mechanism. Glu-324 is an active-site residue.

It belongs to the MurB family. FAD serves as cofactor.

The protein localises to the cytoplasm. The catalysed reaction is UDP-N-acetyl-alpha-D-muramate + NADP(+) = UDP-N-acetyl-3-O-(1-carboxyvinyl)-alpha-D-glucosamine + NADPH + H(+). The protein operates within cell wall biogenesis; peptidoglycan biosynthesis. Functionally, cell wall formation. The sequence is that of UDP-N-acetylenolpyruvoylglucosamine reductase from Photorhabdus laumondii subsp. laumondii (strain DSM 15139 / CIP 105565 / TT01) (Photorhabdus luminescens subsp. laumondii).